The sequence spans 133 residues: Probable nuclear transport factor 2 (133 aa).

The region spanning 10–128 (VAKAFIQHYY…YFIGNEIFRL (119 aa)) is the NTF2 domain.

It is found in the cytoplasm. Its function is as follows. Facilitates protein transport into the nucleus. Could be part of a multicomponent system of cytosolic factors that assemble at the pore complex during nuclear import. This is Probable nuclear transport factor 2 (ran-4) from Caenorhabditis elegans.